Reading from the N-terminus, the 313-residue chain is Probable F-box protein At3g44130 (313 aa).

Residues 1 to 46 (MASGNLPWELEEEILCRLPLGSLVRLRSVCKHWNDFFNDKWFIKKS) enclose the F-box domain.

This is Probable F-box protein At3g44130 from Arabidopsis thaliana (Mouse-ear cress).